The chain runs to 529 residues: Glucose-6-phosphate isomerase (529 aa).

E323 serves as the catalytic Proton donor. Active-site residues include H352 and K456.

The protein belongs to the GPI family.

Its subcellular location is the cytoplasm. The catalysed reaction is alpha-D-glucose 6-phosphate = beta-D-fructose 6-phosphate. Its pathway is carbohydrate biosynthesis; gluconeogenesis. It functions in the pathway carbohydrate degradation; glycolysis; D-glyceraldehyde 3-phosphate and glycerone phosphate from D-glucose: step 2/4. Functionally, catalyzes the reversible isomerization of glucose-6-phosphate to fructose-6-phosphate. This is Glucose-6-phosphate isomerase from Geobacter sulfurreducens (strain ATCC 51573 / DSM 12127 / PCA).